Consider the following 184-residue polypeptide: uncharacterized protein (184 aa).

This is an uncharacterized protein from Caenorhabditis elegans.